A 107-amino-acid chain; its full sequence is MESKRVDVLVGLMLIMAIFGVHSVTAHLPPGICIDHCMKECKLSGIGVVACIKYCPVHCLPPDSSSKEHFCNLGCMLDKCAKFNDDEKKMSDCVFDCRKFHCKINTD.

Positions 1–23 (MESKRVDVLVGLMLIMAIFGVHS) are cleaved as a signal peptide.

Stamen.

This chain is Protein TAP1 (TAP1), found in Antirrhinum majus (Garden snapdragon).